The primary structure comprises 422 residues: Pre-B-cell leukemia transcription factor 2 (422 aa).

The tract at residues 1–43 is disordered; sequence MDEQGRLMQARGVGIPGHPIHGGPQTLTPHPMHEPPADNGEPR. Basic and acidic residues predominate over residues 31-43; that stretch reads PMHEPPADNGEPR. The PBC domain maps to 42 to 236; the sequence is PRKQDIGDIL…VMILRSRFLD (195 aa). A PBC-A region spans residues 49-128; that stretch reads DILQQIMTIT…EGVAGPEKGG (80 aa). Positions 131–236 are PBC-B; it reads AAAAAAAAAS…VMILRSRFLD (106 aa). A DNA-binding region (homeobox) is located at residues 237-299; the sequence is ARRKRRNFSK…NKRIRYKKNI (63 aa). Disordered stretches follow at residues 319 to 341 and 353 to 422; these read QGGHSGANSPTTPTSAGSGGSFN and QGLN…DTSN. The span at 401 to 410 shows a compositional bias: polar residues; it reads VTPSSVTSPT.

This sequence belongs to the TALE/PBX homeobox family.

The protein resides in the nucleus. Functionally, transcriptional activator that binds the sequence 5'-ATCAATCAA-3'. This chain is Pre-B-cell leukemia transcription factor 2, found in Xenopus tropicalis (Western clawed frog).